Reading from the N-terminus, the 325-residue chain is uncharacterized protein (325 aa).

The interval 1–75 (MSQPPEHPGN…PPPGYPTHLQ (75 aa)) is disordered. Composition is skewed to pro residues over residues 24 to 39 (YPPP…PGYG) and 50 to 70 (YNAP…PPGY). The next 4 helical transmembrane spans lie at 96–116 (AVTL…VIGA), 153–173 (IVMF…HAGI), 205–225 (LLIV…GLIF), and 273–293 (LVGE…AALI).

The protein localises to the cell membrane. This is an uncharacterized protein from Mycobacterium tuberculosis (strain CDC 1551 / Oshkosh).